The following is a 319-amino-acid chain: Acetyl-coenzyme A carboxylase carboxyl transferase subunit alpha (319 aa).

Residues 35–296 form the CoA carboxyltransferase C-terminal domain; the sequence is NIDEEVHRLR…KAQLLADLAD (262 aa).

Belongs to the AccA family. As to quaternary structure, acetyl-CoA carboxylase is a heterohexamer composed of biotin carboxyl carrier protein (AccB), biotin carboxylase (AccC) and two subunits each of ACCase subunit alpha (AccA) and ACCase subunit beta (AccD).

It is found in the cytoplasm. The catalysed reaction is N(6)-carboxybiotinyl-L-lysyl-[protein] + acetyl-CoA = N(6)-biotinyl-L-lysyl-[protein] + malonyl-CoA. Its pathway is lipid metabolism; malonyl-CoA biosynthesis; malonyl-CoA from acetyl-CoA: step 1/1. Component of the acetyl coenzyme A carboxylase (ACC) complex. First, biotin carboxylase catalyzes the carboxylation of biotin on its carrier protein (BCCP) and then the CO(2) group is transferred by the carboxyltransferase to acetyl-CoA to form malonyl-CoA. In Escherichia coli O139:H28 (strain E24377A / ETEC), this protein is Acetyl-coenzyme A carboxylase carboxyl transferase subunit alpha.